The sequence spans 616 residues: Dihydroxy-acid dehydratase (616 aa).

D81 contacts Mg(2+). C122 contacts [2Fe-2S] cluster. Positions 123 and 124 each coordinate Mg(2+). Position 124 is an N6-carboxylysine (K124). C195 lines the [2Fe-2S] cluster pocket. E491 lines the Mg(2+) pocket. S517 serves as the catalytic Proton acceptor.

The protein belongs to the IlvD/Edd family. As to quaternary structure, homodimer. Requires [2Fe-2S] cluster as cofactor. Mg(2+) serves as cofactor.

The enzyme catalyses (2R)-2,3-dihydroxy-3-methylbutanoate = 3-methyl-2-oxobutanoate + H2O. The catalysed reaction is (2R,3R)-2,3-dihydroxy-3-methylpentanoate = (S)-3-methyl-2-oxopentanoate + H2O. The protein operates within amino-acid biosynthesis; L-isoleucine biosynthesis; L-isoleucine from 2-oxobutanoate: step 3/4. It functions in the pathway amino-acid biosynthesis; L-valine biosynthesis; L-valine from pyruvate: step 3/4. Its function is as follows. Functions in the biosynthesis of branched-chain amino acids. Catalyzes the dehydration of (2R,3R)-2,3-dihydroxy-3-methylpentanoate (2,3-dihydroxy-3-methylvalerate) into 2-oxo-3-methylpentanoate (2-oxo-3-methylvalerate) and of (2R)-2,3-dihydroxy-3-methylbutanoate (2,3-dihydroxyisovalerate) into 2-oxo-3-methylbutanoate (2-oxoisovalerate), the penultimate precursor to L-isoleucine and L-valine, respectively. The protein is Dihydroxy-acid dehydratase of Yersinia pseudotuberculosis serotype I (strain IP32953).